The following is a 328-amino-acid chain: MLKLVFAGTPDVAVPSLKAFAADPRFDVVGVITRPDAPTGRGRKLTPSPVKATALELGLPVIDLKPRSPEFMEALNNLHADIAAVIAYGNILPKNVLDAVPMGWYNLHFSNLPKWRGAAPAQRAIWAGDPTTGADVFKVGEGLDDGPIVASLTIELTGRETSGELLDRLAEEGAPMYVDALAAVGEGTATFTAQPAEGLEYAHKITVEDARISWTDEAEAIDRQVRACTPHPGAWTELFAEGPIADNDEPAAKPLTLHILAAQPADQSNPNTPAELQPGELKVGKKNVWVGTGSTPLELTQVKAQGKKAMRAADWARGARLSPAACVR.

(6S)-5,6,7,8-tetrahydrofolate is bound at residue 110–113 (SNLP).

Belongs to the Fmt family.

It carries out the reaction L-methionyl-tRNA(fMet) + (6R)-10-formyltetrahydrofolate = N-formyl-L-methionyl-tRNA(fMet) + (6S)-5,6,7,8-tetrahydrofolate + H(+). In terms of biological role, attaches a formyl group to the free amino group of methionyl-tRNA(fMet). The formyl group appears to play a dual role in the initiator identity of N-formylmethionyl-tRNA by promoting its recognition by IF2 and preventing the misappropriation of this tRNA by the elongation apparatus. The polypeptide is Methionyl-tRNA formyltransferase (Bifidobacterium longum (strain DJO10A)).